Consider the following 512-residue polypeptide: Cytochrome P450 monooxygenase hkm5 (512 aa).

The helical transmembrane segment at 18–38 threads the bilayer; that stretch reads LIQLVRALLWVLVITIGGAIV. N-linked (GlcNAc...) asparagine glycans are attached at residues Asn-184, Asn-263, Asn-275, Asn-374, and Asn-419. Residue Cys-456 coordinates heme.

It belongs to the cytochrome P450 family. The cofactor is heme.

Its subcellular location is the membrane. It carries out the reaction hancockiamide A + reduced [NADPH--hemoprotein reductase] + O2 = hancockiamide G + oxidized [NADPH--hemoprotein reductase] + 2 H2O + H(+). The catalysed reaction is hancockiamide B + reduced [NADPH--hemoprotein reductase] + O2 = hancockiamide C + oxidized [NADPH--hemoprotein reductase] + 2 H2O + H(+). The enzyme catalyses hancockiamide D + reduced [NADPH--hemoprotein reductase] + O2 = hancockiamide H + oxidized [NADPH--hemoprotein reductase] + 2 H2O + H(+). It functions in the pathway secondary metabolite biosynthesis. Its function is as follows. Cytochrome P450 monooxygenase; part of the gene cluster that mediates the biosynthesis of hancockiamides, an unusual new family of N-cinnamoylated piperazines. The NRPS hkm10 and the NmrA-like reductase hkm9 are proposed to convert two molecules of L-Phe to the intermediary piperazine called xenocockiamide A. Xenocockiamide A is then converted to hancockiamide D via a series of hydroxylations and O-methylations. The tyrosinase hkm6 may catalyze an aromatic hydroxylation, then the 2-oxoglutarate-dependent Fe(II) dioxygenase hkm4 and the FAD-dependent phenol hydroxylase hkm7 may catalyze consecutive hydroxylations to install 2 more hydroxy groups, and the methyltransferase hkm8 probably catalyzes two methylations using 2 molecules of S-adenosyl-L-methionine (SAM). The NRPS hkm11 activates and transfers trans-cinnamate supplied by the PAL hkm12 to hancockiamide D and produces hancockiamide A. NRPS Hkm11 has the flexibility to tolerate the bulky hancockiamide G as a substrate and the absence of the acetyl-transferase hkm3 opens up the opportunity for hkm11 to introduce a second N-cinnamoyl moiety. The cytochrome P450 monooxygenase hkm5 catalyzes the methylenedioxy bridge formation, converting hancockiamide A into hancockiamide G. Hkm5 can also convert hancockiamide B into hancockiamide C, and hancockiamide D into hancockiamide H. The N-acetyltransferase hkm3 finally transfers an acetyl group to 1-N of piperazine, converting hancockiamide A into hancockiamide B and hancockiamide G into hancockiamide C. This Aspergillus hancockii protein is Cytochrome P450 monooxygenase hkm5.